The primary structure comprises 126 residues: Fluoride-specific ion channel FluC 2 (126 aa).

Transmembrane regions (helical) follow at residues 11 to 31, 34 to 54, 66 to 86, and 93 to 113; these read IFLIGAGGFLGAVCRFLLCEL, GQLGILSVNVIGSFMLGMIMY, GKIAFGTGFMGAFTTFSTFAV, and FIPALGNISANIFLTLTGVFF. Na(+)-binding residues include Gly76 and Thr79.

Belongs to the fluoride channel Fluc/FEX (TC 1.A.43) family.

It localises to the cell membrane. It catalyses the reaction fluoride(in) = fluoride(out). Its activity is regulated as follows. Na(+) is not transported, but it plays an essential structural role and its presence is essential for fluoride channel function. In terms of biological role, fluoride-specific ion channel. Important for reducing fluoride concentration in the cell, thus reducing its toxicity. The protein is Fluoride-specific ion channel FluC 2 of Methanosarcina acetivorans (strain ATCC 35395 / DSM 2834 / JCM 12185 / C2A).